An 822-amino-acid chain; its full sequence is Putative pentatricopeptide repeat-containing protein At5g13230, mitochondrial (822 aa).

Residues 1–70 constitute a mitochondrion transit peptide; it reads MIVFMRIIHV…QKNDPISAKA (70 aa). PPR repeat units lie at residues 48-82, 83-117, 145-179, 180-210, 211-245, 246-280, 281-311, 312-346, 347-381, 382-416, 417-447, 448-482, 483-513, 514-548, 549-584, and 585-619; these read DSHA…GSCL, DLFA…NNVS, NPHV…GYDS, NAFV…ILCK, DIVV…GFMP, NNYT…CYVL, DPRV…MPKN, DVVP…FVVP, NEFT…GFDL, DIYV…NEVS, WNTV…QVSV, TEVT…NNAK, KVAV…METI, DVAS…DCKP, NGLT…GIEP, and CLEH…PSVM. The tract at residues 620-695 is type E motif; sequence IWRAMLSASM…EPGLSWIEHQ (76 aa). The type E(+) motif stretch occupies residues 696–726; it reads GDVHYFSVGLSDHPDMKLINGMLEWLNMKAT. The type DYW motif stretch occupies residues 727 to 822; that stretch reads RAGYVPDRNA…AGVCSCGDHW (96 aa).

It belongs to the PPR family. PCMP-H subfamily.

It is found in the mitochondrion. This chain is Putative pentatricopeptide repeat-containing protein At5g13230, mitochondrial (PCMP-H89), found in Arabidopsis thaliana (Mouse-ear cress).